The sequence spans 244 residues: 5-oxoprolinase subunit A (244 aa).

Belongs to the LamB/PxpA family. As to quaternary structure, forms a complex composed of PxpA, PxpB and PxpC.

The enzyme catalyses 5-oxo-L-proline + ATP + 2 H2O = L-glutamate + ADP + phosphate + H(+). Functionally, catalyzes the cleavage of 5-oxoproline to form L-glutamate coupled to the hydrolysis of ATP to ADP and inorganic phosphate. This chain is 5-oxoprolinase subunit A, found in Shigella flexneri.